A 162-amino-acid chain; its full sequence is NADPH-dependent 7-cyano-7-deazaguanine reductase (162 aa).

Residue Cys53 is the Thioimide intermediate of the active site. Catalysis depends on Asp60, which acts as the Proton donor. Substrate is bound by residues 75 to 77 (VES) and 94 to 95 (HE).

Belongs to the GTP cyclohydrolase I family. QueF type 1 subfamily.

It localises to the cytoplasm. The enzyme catalyses 7-aminomethyl-7-carbaguanine + 2 NADP(+) = 7-cyano-7-deazaguanine + 2 NADPH + 3 H(+). The protein operates within tRNA modification; tRNA-queuosine biosynthesis. Catalyzes the NADPH-dependent reduction of 7-cyano-7-deazaguanine (preQ0) to 7-aminomethyl-7-deazaguanine (preQ1). This Exiguobacterium sibiricum (strain DSM 17290 / CCUG 55495 / CIP 109462 / JCM 13490 / 255-15) protein is NADPH-dependent 7-cyano-7-deazaguanine reductase.